Here is a 287-residue protein sequence, read N- to C-terminus: Pol-RFamide neuropeptides (287 aa).

An N-terminal signal peptide occupies residues 1 to 21 (MNLITLLVLGVSTCLIYGIEA). Positions 22 to 52 (DEKTSSALENEIVEILNGNFKNEKKSIETSD) are excised as a propeptide. The residue at position 53 (Q53) is a Pyrrolidone carboxylic acid. Position 59 is a phenylalanine amide (F59). The propeptide occupies 62 to 64 (EVN). Q65 carries the pyrrolidone carboxylic acid modification. F71 carries the phenylalanine amide modification. A propeptide spanning residues 74–77 (ELSD) is cleaved from the precursor. At Q78 the chain carries Pyrrolidone carboxylic acid. The residue at position 84 (F84) is a Phenylalanine amide. Residues 87–90 (ELSD) constitute a propeptide that is removed on maturation. Q91 carries the post-translational modification Pyrrolidone carboxylic acid. Residue F97 is modified to Phenylalanine amide. Positions 100 to 103 (EVLD) are excised as a propeptide. The residue at position 104 (Q104) is a Pyrrolidone carboxylic acid. F110 carries the phenylalanine amide modification. Residues 113–116 (DASN) constitute a propeptide that is removed on maturation. Pyrrolidone carboxylic acid is present on Q117. Phenylalanine amide is present on F123. Residues 126–129 (ELSD) constitute a propeptide that is removed on maturation. Q130 is modified (pyrrolidone carboxylic acid). At F136 the chain carries Phenylalanine amide. A propeptide spanning residues 139 to 142 (EGSN) is cleaved from the precursor. The residue at position 143 (Q143) is a Pyrrolidone carboxylic acid. Residue F149 is modified to Phenylalanine amide. A propeptide spanning residues 152 to 168 (EASKNDLEKQNGRGDSD) is cleaved from the precursor. Q169 bears the Pyrrolidone carboxylic acid mark. At F175 the chain carries Phenylalanine amide. The propeptide occupies 178–181 (EARK). Q182 carries the pyrrolidone carboxylic acid modification. F188 carries the post-translational modification Phenylalanine amide. Positions 192-194 (DMN) are excised as a propeptide. Position 195 is a pyrrolidone carboxylic acid (Q195). Histidine amide is present on H201. A propeptide spanning residues 204 to 207 (ETSD) is cleaved from the precursor. Q208 carries the post-translational modification Pyrrolidone carboxylic acid. At F214 the chain carries Phenylalanine amide. Residues 217–220 (QLSD) constitute a propeptide that is removed on maturation. Q221 carries the post-translational modification Pyrrolidone carboxylic acid. Position 227 is a phenylalanine amide (F227). The disordered stretch occupies residues 229 to 267 (REVKNDKNNPFRSRYTGDSTQLQRENNQPIEELRDNTEK). Positions 230–287 (EVKNDKNNPFRSRYTGDSTQLQRENNQPIEELRDNTEKVSIENKPIMKKTSVKISKTV) are excised as a propeptide. Residues 238–257 (PFRSRYTGDSTQLQRENNQP) show a composition bias toward polar residues.

This sequence belongs to the FARP (FMRFamide related peptide) family. Post-translationally, the N-terminal processing sites of the Pol-RFamide peptides are acidic suggesting that cniderian nervous systems may use a variety of unconventional processing procedures.

It localises to the secreted. Functionally, has direct action on motoneurons, and effect includes transient inhibition followed by prolonged excitation. This chain is Pol-RFamide neuropeptides, found in Polyorchis penicillatus (Hydromedusa).